We begin with the raw amino-acid sequence, 630 residues long: DELLA protein DWARF8 (630 aa).

The tract at residues 1 to 35 is disordered; that stretch reads MKREYQDAGGSGGDMGSSKDKMMAAAAGAGEQEEE. Positions 38–42 match the DELLA motif motif; it reads DELLA. The segment at 161–222 is disordered; the sequence is PIPSPVAAPS…AAPPATQASA (62 aa). Low complexity-rich tracts occupy residues 165–176 and 191–222; these read PVAAPSADPSTD and TSSSSSSSSSMDGGRTRSSVVEAAPPATQASA. Positions 234–623 constitute a GRAS domain; sequence VDTQEAGIRL…RPLIATSAWR (390 aa). Positions 241 to 297 are leucine repeat I (LRI); that stretch reads IRLVHALLACAEAVQQENFSAAEALVKQIPMLASSQGGAMRKVAAYFGEALARRVYR. The LxCxE motif signature appears at 248-252; sequence LACAE. The VHIID stretch occupies residues 316-381; the sequence is HAHFYESCPY…GGPPSFRLTG (66 aa). The VHIID motif lies at 347–351; that stretch reads VHVVD. The leucine repeat II (LRII) stretch occupies residues 395 to 427; the sequence is QVGWKLAQFAHTIRVDFQYRGLVAATLADLEPF. Residues 443 to 544 form a PFYRE region; sequence IAVNSVFELH…EVYLGRQICN (102 aa). An LXXLL motif motif is present at residues 451–455; that stretch reads LHRLL. The interval 547-623 is SAW; that stretch reads ACEGAERTER…RPLIATSAWR (77 aa).

Belongs to the GRAS family. DELLA subfamily. Phosphorylated. In terms of processing, ubiquitinated. Upon GA application it is ubiquitinated, leading to its subsequent degradation.

It is found in the nucleus. Its function is as follows. Probable transcriptional regulator that acts as a repressor of the gibberellin (GA) signaling pathway. Probably acts by participating in large multiprotein complexes that repress transcription of GA-inducible genes. Upon GA application, it is degraded by the proteasome, allowing the GA signaling pathway. This Zea mays (Maize) protein is DELLA protein DWARF8 (D8).